We begin with the raw amino-acid sequence, 2544 residues long: DNA polymerase theta (2544 aa).

Basic residues predominate over residues 1–13; it reads MSLPRRSRKRRRS. The segment at 1 to 57 is disordered; the sequence is MSLPRRSRKRRRSSSGSDTFSGDGDSFVSPQLRCGPVLSPPPGLGRGRRLTGTGTNK. A compositionally biased stretch (low complexity) spans 14–29; that stretch reads SSGSDTFSGDGDSFVS. Residues glutamine 95 and 114-121 contribute to the ATP site; that span reads APTSAGKT. One can recognise a Helicase ATP-binding domain in the interval 101 to 285; that stretch reads LGHVLEGKNL…WLNAELYHTD (185 aa). The interval 101 to 551 is helicase activity; that stretch reads LGHVLEGKNL…STSQDMQTYA (451 aa). The DEAH box signature appears at 215–218; the sequence is DELH. In terms of domain architecture, Helicase C-terminal spans 320 to 551; that stretch reads GDEDHIVSLC…STSQDMQTYA (232 aa). Residues 844 to 890 form an interaction with RAD51 region; it reads DEEEEAAEERRSMRTIWVTGKGLSAREAAALIVEEAKMILQQDLIEM. The segment at 896 to 955 is disordered; it reads PKSPLSSSTHSRTSTSEVKEHTFKSQTKSSHKRLASMGRNSIRASGSNDKPSPDAERGID. Over residues 898 to 911 the composition is skewed to low complexity; that stretch reads SPLSSSTHSRTSTS. Residues 933 to 945 show a composition bias toward polar residues; the sequence is GRNSIRASGSNDK. Over residues 946 to 955 the composition is skewed to basic and acidic residues; it reads PSPDAERGID. N6-acetyllysine is present on lysine 983. Residues 1022-1034 are compositionally biased toward polar residues; that stretch reads LSFSSEQVNNTLP. 2 disordered regions span residues 1022–1058 and 1128–1167; these read LSFS…GMHR and VGHP…ESQL. Residues 1128–1139 are compositionally biased toward low complexity; it reads VGHPAAGSSPAA. Basic and acidic residues predominate over residues 1140–1155; it reads ARDRRGLAARETEKGN. The residue at position 1265 (serine 1265) is a Phosphoserine. Disordered regions lie at residues 1266–1288 and 1331–1353; these read GVQG…SNPA and QNKC…DHVD. A phosphoserine mark is found at serine 1438, serine 1442, serine 1444, and serine 1449. The interval 1478 to 1501 is disordered; it reads FSNPPHPQEDPVMTPTVSEPQGTQ. Positions 1492–1501 are enriched in polar residues; sequence PTVSEPQGTQ. Residues serine 1511, serine 1519, serine 1585, and serine 1592 each carry the phosphoserine modification. Residues 1557 to 1591 are disordered; sequence ECPQGKLVRGDQNEGSPKPKLTETNQDNSFTWSGA. The span at 1578 to 1591 shows a compositional bias: polar residues; it reads TETNQDNSFTWSGA. Composition is skewed to basic and acidic residues over residues 1606-1616 and 1628-1638; these read VSSPRENEKPK and NSKESHEREEI. The segment at 1606 to 1697 is disordered; sequence VSSPRENEKP…GLIPPTPVPA (92 aa). Polar residues predominate over residues 1641 to 1652; that stretch reads DLGTVQRTSVFP. A compositionally biased stretch (basic and acidic residues) spans 1656–1667; sequence VKNRTEGLESKA. Threonine 1710 carries the phosphothreonine modification. The segment at 2052-2538 is DNA polymerase activity; the sequence is AECESQKHVM…KVKIGASWGE (487 aa). Loop stretches follow at residues 2097–2132 and 2212–2276; these read KLPP…GRQF and EIKM…VPFP. Over residues 2104–2117 the composition is skewed to polar residues; sequence MKTQGSKKTLGSTR. Residues 2104 to 2124 are disordered; sequence MKTQGSKKTLGSTRRGNESGR. The For DNA polymerase activity role is filled by aspartate 2284. Residues aspartate 2284 and tyrosine 2285 each coordinate Mg(2+). Positions 2445-2489 are loop 3; that stretch reads QLETFRSTFKSHGHRESMLQNDRTGLLPKRKLKGMFCPMRGGFFI. Aspartate 2494 lines the Mg(2+) pocket.

The protein belongs to the DNA polymerase type-A family. In terms of assembly, homomultimer; forms homodimers and homotetramers. Interacts with RAD51. Interacts with ORC2 and ORC4. Interacts with RHNO1; interaction takes place during mitosis and promotes POLQ recruitment to DNA damage sites. Interacts (when phosphorylated) with TOPBP1 (via BRCT domains 7 and 8); promoting POLQ recruitment to DNA damage sites. Requires Mg(2+) as cofactor. Phosphorylated by PLK1; promoting interaction with TOPBP1 and recruitment to DNA damage sites.

Its subcellular location is the nucleus. It localises to the chromosome. It catalyses the reaction DNA(n) + a 2'-deoxyribonucleoside 5'-triphosphate = DNA(n+1) + diphosphate. The enzyme catalyses ATP + H2O = ADP + phosphate + H(+). Functionally, low-fidelity DNA polymerase with a helicase activity that promotes microhomology-mediated end-joining (MMEJ), an alternative non-homologous end-joining (NHEJ) machinery required to repair double-strand breaks in DNA during mitosis. MMEJ is an error-prone repair pathway that produces deletions of sequences from the strand being repaired and promotes genomic rearrangements, such as telomere fusions, some of them leading to cellular transformation. MMEJ is required during mitosis to repair persistent double-strand breaks that originate in S-phase. Although error-prone, MMEJ protects against chromosomal instability and tumorigenesis. The polymerase acts by binding directly the 2 ends of resected double-strand breaks, allowing microhomologous sequences in the overhangs to form base pairs. It then extends each strand from the base-paired region using the opposing overhang as a template. Requires partially resected DNA containing 2 to 6 base pairs of microhomology to perform MMEJ. The polymerase lacks proofreading activity and is highly promiscuous: unlike most polymerases, promotes extension of ssDNA and partial ssDNA (pssDNA) substrates. When the ends of a break do not contain terminal microhomology must identify embedded complementary sequences through a scanning step. Also acts as a DNA helicase, promoting dissociation of the replication protein A complex (RPA/RP-A), composed of RPA1, RPA2 and RPA3, from resected double-strand breaks to allow their annealing and subsequent joining by MMEJ. Removal of RPA/RP-A complex proteins prevents RAD51 accumulation at resected ends, thereby inhibiting homology-recombination repair (HR) pathway. Also shows RNA-directed DNA polymerase activity to mediate DNA repair in vitro; however this activity needs additional evidence in vivo. May also have lyase activity. Involved in somatic hypermutation of immunoglobulin genes, a process that requires the activity of DNA polymerases to ultimately introduce mutations at both A/T and C/G base pairs. However, POLQ does not play a major role in somatic hypermutation. POLQ-mediated end joining activity is involved in random integration of exogenous DNA hampers. The chain is DNA polymerase theta from Mus musculus (Mouse).